The following is a 256-amino-acid chain: Small ribosomal subunit protein eS1B (256 aa).

At alanine 2 the chain carries N-acetylalanine; partial.

This sequence belongs to the eukaryotic ribosomal protein eS1 family. In terms of assembly, component of the small ribosomal subunit. Mature ribosomes consist of a small (40S) and a large (60S) subunit. The 40S subunit contains about 33 different proteins and 1 molecule of RNA (18S). The 60S subunit contains about 49 different proteins and 3 molecules of RNA (25S, 5.8S and 5S).

The protein resides in the cytoplasm. The sequence is that of Small ribosomal subunit protein eS1B from Clavispora lusitaniae (strain ATCC 42720) (Yeast).